The chain runs to 1833 residues: Protein TIC 214 (1833 aa).

The next 6 membrane-spanning stretches (helical) occupy residues 18–38 (IINSVVVVGLYYGFLTTFSIG), 67–87 (FIMGQLMMFISIYYTPLHLAL), 90–110 (PHTITVLALPYLLFHFFWNNH), 127–147 (LSIQCVFLNNLIFQLFNYFIL), 175–195 (VGWLIGHILFMKWVGLVLVWI), and 218–238 (IFSILFFITCVYYLGRMPSPI). Positions 254 to 301 (EETNLEIEKTSETKETKQEEEGFTEEDPSPSLFSEEKEDPDKIDETEK) are disordered. 2 stretches are compositionally biased toward basic and acidic residues: residues 259–273 (EIEKTSETKETKQEE) and 292–301 (DPDKIDETEK).

The protein belongs to the TIC214 family. In terms of assembly, part of the Tic complex.

The protein resides in the plastid. Its subcellular location is the chloroplast inner membrane. Involved in protein precursor import into chloroplasts. May be part of an intermediate translocation complex acting as a protein-conducting channel at the inner envelope. This chain is Protein TIC 214, found in Spinacia oleracea (Spinach).